Reading from the N-terminus, the 396-residue chain is Anhydro-N-acetylmuramic acid kinase (396 aa).

Gly21–Asp28 contributes to the ATP binding site.

It belongs to the anhydro-N-acetylmuramic acid kinase family.

It catalyses the reaction 1,6-anhydro-N-acetyl-beta-muramate + ATP + H2O = N-acetyl-D-muramate 6-phosphate + ADP + H(+). It functions in the pathway amino-sugar metabolism; 1,6-anhydro-N-acetylmuramate degradation. Its pathway is cell wall biogenesis; peptidoglycan recycling. Functionally, catalyzes the specific phosphorylation of 1,6-anhydro-N-acetylmuramic acid (anhMurNAc) with the simultaneous cleavage of the 1,6-anhydro ring, generating MurNAc-6-P. Is required for the utilization of anhMurNAc either imported from the medium or derived from its own cell wall murein, and thus plays a role in cell wall recycling. This chain is Anhydro-N-acetylmuramic acid kinase, found in Caldanaerobacter subterraneus subsp. tengcongensis (strain DSM 15242 / JCM 11007 / NBRC 100824 / MB4) (Thermoanaerobacter tengcongensis).